The sequence spans 622 residues: Lamin Dm0 (622 aa).

Residues 1–50 (MSSKSRRAGTATPQPGNTSTPRPPSAGPQPPPPSTHSQTASSPLSPTRHS) are disordered. S2 bears the N-acetylserine mark. The head stretch occupies residues 2-56 (SSKSRRAGTATPQPGNTSTPRPPSAGPQPPPPSTHSQTASSPLSPTRHSRVAEKV). T10, T12, and T20 each carry phosphothreonine. The segment covering 21 to 34 (PRPPSAGPQPPPPS) has biased composition (pro residues). S25 and S34 each carry phosphoserine. Phosphothreonine is present on T39. Phosphoserine is present on residues S41, S42, and S45. T47 is modified (phosphothreonine). In terms of domain architecture, IF rod spans 54–410 (EKVELQNLND…KLLVGEEARL (357 aa)). Positions 55 to 91 (KVELQNLNDRLATYIDRVRNLETENSRLTIEVQTTRD) are coil 1A. The segment at 92-103 (TVTRETTNIKNI) is linker 1. A coil 1B region spans residues 104-241 (FEAELLETRR…QIHSQEINES (138 aa)). Position 235 is a phosphoserine (S235). Positions 242 to 265 (RRIKQTEYSEIDGRLSSEYDAKLK) are linker 2. The residue at position 249 (Y249) is a Phosphotyrosine. Residues S250 and S311 each carry the phosphoserine modification. Residues 266-408 (QSLQELRAQY…YDKLLVGEEA (143 aa)) form a coil 2 region. A tail region spans residues 409–619 (RLNITPATNT…GDPQQSNEKC (211 aa)). Phosphothreonine occurs at positions 413 and 435. Polar residues predominate over residues 429-440 (RNSTRATPSRRT). The tract at residues 429 to 448 (RNSTRATPSRRTPSAAVKRK) is disordered. The residue at position 442 (S442) is a Phosphoserine. A Nuclear localization signal motif is present at residues 446-451 (KRKRAV). 2 positions are modified to phosphoserine: S455 and S459. The 128-residue stretch at 461-588 (ADYYVSASAK…RIVSQHTSSS (128 aa)) folds into the LTD domain. S595 is subject to Phosphoserine. T597 is modified (phosphothreonine). The tract at residues 603-622 (EQLYHQQGDPQQSNEKCAIM) is disordered. Over residues 605–622 (LYHQQGDPQQSNEKCAIM) the composition is skewed to polar residues. Residue S615 is modified to Phosphoserine. A Cysteine methyl ester modification is found at C619. C619 is lipidated: S-farnesyl cysteine. The propeptide at 620–622 (AIM) is removed in mature form.

Belongs to the intermediate filament family. As to quaternary structure, interacts directly with LBR. Interacts with MAN1. Interacts with Ote. In terms of processing, three forms of lamin have been identified in D.melanogaster, lamin Dm0 is rapidly processed to lamin Dm1 in the cytoplasm, Dm1 is then assembled in the nuclear envelope and is then phosphorylated, forming lamin Dm2. As to expression, constitutively expressed in all tissues (at protein level). Expressed in spermatocytes (at protein level).

The protein resides in the nucleus. Its subcellular location is the nucleus inner membrane. It is found in the nucleus envelope. The protein localises to the nucleus lamina. It localises to the cytoplasm. The protein resides in the cytoskeleton. Its subcellular location is the spindle pole. Its function is as follows. Lamins are components of the nuclear lamina, a fibrous layer on the nucleoplasmic side of the inner nuclear membrane, which is thought to provide a framework for the nuclear envelope and may also interact with chromatin. May have a role in the localization of the LEM domain proteins Ote, bocks and MAN1 to the nuclear membrane. In spermatocytes, plays a role in maintaining type-A lamin LamC nuclear localization; regulates meiotic cytokinesis by maintaining the structure of the spindle envelope, and by contributing to the formation of the contractile ring and central spindle. Required for nuclear migration and to link the microtubule organizing center (MTOC) to the nucleus. In addition, is required for nuclear envelope localization of klar. The polypeptide is Lamin Dm0 (Drosophila melanogaster (Fruit fly)).